Here is a 249-residue protein sequence, read N- to C-terminus: Pyridoxine 5'-phosphate synthase (249 aa).

Asparagine 7 is a 3-amino-2-oxopropyl phosphate binding site. 9–10 (DH) provides a ligand contact to 1-deoxy-D-xylulose 5-phosphate. Arginine 18 provides a ligand contact to 3-amino-2-oxopropyl phosphate. The active-site Proton acceptor is histidine 43. 1-deoxy-D-xylulose 5-phosphate-binding residues include arginine 45 and histidine 50. The active-site Proton acceptor is glutamate 70. 1-deoxy-D-xylulose 5-phosphate is bound at residue threonine 100. Histidine 190 functions as the Proton donor in the catalytic mechanism. 3-amino-2-oxopropyl phosphate contacts are provided by residues glycine 191 and 212–213 (GH).

It belongs to the PNP synthase family. Homooctamer; tetramer of dimers.

It localises to the cytoplasm. It carries out the reaction 3-amino-2-oxopropyl phosphate + 1-deoxy-D-xylulose 5-phosphate = pyridoxine 5'-phosphate + phosphate + 2 H2O + H(+). The protein operates within cofactor biosynthesis; pyridoxine 5'-phosphate biosynthesis; pyridoxine 5'-phosphate from D-erythrose 4-phosphate: step 5/5. Catalyzes the complicated ring closure reaction between the two acyclic compounds 1-deoxy-D-xylulose-5-phosphate (DXP) and 3-amino-2-oxopropyl phosphate (1-amino-acetone-3-phosphate or AAP) to form pyridoxine 5'-phosphate (PNP) and inorganic phosphate. The protein is Pyridoxine 5'-phosphate synthase of Synechococcus sp. (strain CC9605).